Consider the following 169-residue polypeptide: Ubiquitin-conjugating enzyme E2 2 (169 aa).

The UBC core domain occupies 4 to 150 (AAKRRLIRDF…VKKTVELSWV (147 aa)). Cys88 serves as the catalytic Glycyl thioester intermediate.

This sequence belongs to the ubiquitin-conjugating enzyme family.

It is found in the cytoplasm. Its subcellular location is the nucleus. It catalyses the reaction S-ubiquitinyl-[E1 ubiquitin-activating enzyme]-L-cysteine + [E2 ubiquitin-conjugating enzyme]-L-cysteine = [E1 ubiquitin-activating enzyme]-L-cysteine + S-ubiquitinyl-[E2 ubiquitin-conjugating enzyme]-L-cysteine.. Its pathway is protein modification; protein ubiquitination. Catalyzes the covalent attachment of ubiquitin to other proteins. Plays a role in transcription regulation by catalyzing the monoubiquitination of histone H2B to form H2BK123ub1. H2BK123ub1 gives a specific tag for epigenetic transcriptional activation and is also a prerequisite for H3K4me and H3K79me formation. Also involved in postreplication repair of UV-damaged DNA, in N-end rule-dependent protein degradation and in sporulation. The sequence is that of Ubiquitin-conjugating enzyme E2 2 (UBC2) from Cryptococcus neoformans var. neoformans serotype D (strain B-3501A) (Filobasidiella neoformans).